Reading from the N-terminus, the 339-residue chain is D-erythrose-4-phosphate dehydrogenase (339 aa).

Residue 12 to 13 participates in NAD(+) binding; the sequence is RI. Substrate-binding positions include 154-156, Arg-200, 213-214, and Arg-236; these read SCT and TK. Cys-155 serves as the catalytic Nucleophile. Position 318 (Asn-318) interacts with NAD(+).

It belongs to the glyceraldehyde-3-phosphate dehydrogenase family. Epd subfamily. As to quaternary structure, homotetramer.

The protein resides in the cytoplasm. The catalysed reaction is D-erythrose 4-phosphate + NAD(+) + H2O = 4-phospho-D-erythronate + NADH + 2 H(+). It participates in cofactor biosynthesis; pyridoxine 5'-phosphate biosynthesis; pyridoxine 5'-phosphate from D-erythrose 4-phosphate: step 1/5. Catalyzes the NAD-dependent conversion of D-erythrose 4-phosphate to 4-phosphoerythronate. The protein is D-erythrose-4-phosphate dehydrogenase of Enterobacter sp. (strain 638).